A 275-amino-acid chain; its full sequence is Large ribosomal subunit protein uL2c (275 aa).

The tract at residues 223–255 is disordered; sequence VVMNPVDHPHGGGEGRAPIGRSRPVTPWGRPAL.

This sequence belongs to the universal ribosomal protein uL2 family. Part of the 50S ribosomal subunit.

Its subcellular location is the plastid. The protein localises to the chloroplast. The chain is Large ribosomal subunit protein uL2c (rpl2) from Pleurastrum terricola (Filamentous green alga).